The chain runs to 225 residues: Cold-regulated 413 inner membrane protein 1, chloroplastic (225 aa).

The transit peptide at 1–76 directs the protein to the chloroplast; the sequence is MASLCLSSSR…RKRGSSVVCY (76 aa). Residue Ala-77 is a topological domain, stromal. Residues 78–98 traverse the membrane as a helical segment; it reads APISANSLQWISTISCLALML. The Chloroplast intermembrane segment spans residues 99 to 102; the sequence is ARGT. Residues 103-123 traverse the membrane as a helical segment; the sequence is GIHKSVVVPLFALHAPSSIVA. Residues 124–128 lie on the Stromal side of the membrane; that stretch reads WIKGE. Residues 129–149 form a helical membrane-spanning segment; it reads YGVWAAFLALIARLFFTFPGE. Over 150–151 the chain is Chloroplast intermembrane; sequence LE. A helical membrane pass occupies residues 152 to 172; it reads LPFIALLLVIVAPYQVMNIRG. Topologically, residues 173–175 are stromal; sequence KQE. Residues 176-196 traverse the membrane as a helical segment; it reads GAIIAIAISGFLAFQHFSRAG. The Chloroplast intermembrane portion of the chain corresponds to 197–204; sequence SLEKAYEK. The chain crosses the membrane as a helical span at residues 205 to 225; it reads GSVLATVAIIGVTVVSLLLLL.

This sequence belongs to the Cold-regulated 413 protein family.

It is found in the plastid. Its subcellular location is the chloroplast inner membrane. The polypeptide is Cold-regulated 413 inner membrane protein 1, chloroplastic (COR413IM1) (Arabidopsis thaliana (Mouse-ear cress)).